The sequence spans 210 residues: Probable GTP-binding protein EngB (210 aa).

The 175-residue stretch at 30 to 204 (QGYEVAFAGR…YRVLADWMEL (175 aa)) folds into the EngB-type G domain. Residues 38-45 (GRSNAGKS), 64-68 (GRTQL), 82-85 (DLPG), 149-152 (TKAD), and 182-185 (LFSA) contribute to the GTP site. Residues Ser-45 and Thr-66 each contribute to the Mg(2+) site.

It belongs to the TRAFAC class TrmE-Era-EngA-EngB-Septin-like GTPase superfamily. EngB GTPase family. It depends on Mg(2+) as a cofactor.

In terms of biological role, necessary for normal cell division and for the maintenance of normal septation. This chain is Probable GTP-binding protein EngB, found in Pseudomonas putida (strain ATCC 700007 / DSM 6899 / JCM 31910 / BCRC 17059 / LMG 24140 / F1).